We begin with the raw amino-acid sequence, 1392 residues long: Leucine-rich PPR motif-containing protein, mitochondrial (1392 aa).

Residues 1–59 (MAALLRPARWLLGAAAAPRLPLSLRLPAGVPGRLSSVVRVAAVGSRPAAGERLSQARLY) constitute a mitochondrion transit peptide. PPR repeat units follow at residues 125 to 159 (LLRS…GVVY), 160 to 194 (DVSH…NIQP), 195 to 229 (NRVT…DLPI), 230 to 264 (TEAV…GIEP), 265 to 299 (GPDT…DHYF), 300 to 334 (MDRD…RRSI), 402 to 436 (HSSS…GFPI), 437 to 471 (RPHY…GVDP), 677 to 708 (VGSA…ESDM), 709 to 745 (VIGG…SAIL), 746 to 783 (DTAK…IKDA), 784 to 820 (TVLS…AKPS), 821 to 856 (SNIS…VLPR), and 953 to 987 (RDQM…NIIP). Residues Lys-151, Lys-186, and Lys-225 each carry the N6-acetyllysine modification. At Lys-291 the chain carries N6-acetyllysine. Lys-462 is subject to N6-acetyllysine. The residue at position 749 (Lys-749) is an N6-acetyllysine. The segment at 931–1050 (ASNQVEALEK…NCKLKKSKDA (120 aa)) is RNA-binding. Residues Ser-1025, Ser-1026, and Ser-1028 each carry the phosphoserine modification. PPR repeat units follow at residues 1030 to 1064 (GEDV…NVVF), 1065 to 1101 (SSET…GFTL), 1102 to 1136 (NDAA…KQVP), 1137 to 1175 (SQIA…LSKM), 1176 to 1210 (VFIN…QAIE), and 1315 to 1349 (NDKV…NLKL). Ser-1137 carries the post-translational modification Phosphoserine.

As to quaternary structure, component of mRNP complexes associated with HNRPA1. Component of the complex, at least composed of LRPPRC, BECN1 and BCL2; the interactions prevent BECN1 from forming an autophagy-inducing complex with PIK3C3. Interacts with CECR2, HEBP2, MAP1S and UXT. Interacts with PPARGC1A. Interacts with FOXO1. Interacts (via N-terminus) with EIF4E; the interaction promotes association of EIF4E with 4ESE-containing mRNAs. Interacts with exportin XPO1/CRM1; interacts both alone and in complex with EIF4E and 4ESE-containing mRNAs to form an EIF4E-dependent mRNA export complex. Interacts with importin IPO8; the interaction occurs when LRPPRC is in its RNA-free form and returns LRPPRC to the nucleus for further export rounds. Interacts with BECN1. As to expression, strongly expressed in heart, liver and kidney. Weakly expressed in brain, skeletal muscle and testes.

It localises to the mitochondrion. The protein resides in the nucleus. The protein localises to the nucleoplasm. It is found in the nucleus inner membrane. Its subcellular location is the nucleus outer membrane. Functionally, may play a role in RNA metabolism in both nuclei and mitochondria. In the nucleus binds to HNRPA1-associated poly(A) mRNAs and is part of nmRNP complexes at late stages of mRNA maturation which are possibly associated with nuclear mRNA export. Positively modulates nuclear export of mRNAs containing the EIF4E sensitivity element (4ESE) by binding simultaneously to both EIF4E and the 4ESE and acting as a platform for assembly for the RNA export complex. Also binds to exportin XPO1/CRM1 to engage the nuclear pore and traffic the bound mRNAs to the cytoplasm. May bind mature mRNA in the nucleus outer membrane. In mitochondria binds to poly(A) mRNA. Plays a role in translation or stability of mitochondrially encoded cytochrome c oxidase (COX) subunits. May be involved in transcription regulation. Cooperates with PPARGC1A to regulate certain mitochondrially encoded genes and gluconeogenic genes and may regulate docking of PPARGC1A to transcription factors. Seems to be involved in the transcription regulation of the multidrug-related genes MDR1 and MVP. Part of a nuclear factor that binds to the invMED1 element of MDR1 and MVP gene promoters. Binds single-stranded DNA. Required for maintaining mitochondrial potential. Suppresses the initiation of basal levels of autophagy and mitophagy by sustaining BCL2 levels. The chain is Leucine-rich PPR motif-containing protein, mitochondrial (Lrpprc) from Mus musculus (Mouse).